The chain runs to 264 residues: MGKLQDWSITTCLFLFFLHASQTHCTSQSHVRNRLYRSKRGIGSSIDTSHLNAIRRLSVSLSLQNISGVNQQEQKERDLIENLPGQPSVNFKQYGGYVTVNESAGRSLYYYFVEATNTKNSSPLVLWLNGGPGCSSLYGAFQELGPFRVHSDNKTLYTNPYSWNNVANMLFLESPAGTGFSYTNTTTDMENPGDMKTAADNYVFLVKWLERFPEYKGRDFYIAGESYAGHYVQWRHGCGDFGDSYNVRTEDDESNGCYGMASVV.

A signal peptide spans 1 to 23; it reads MGKLQDWSITTCLFLFFLHASQT. N-linked (GlcNAc...) asparagine glycosylation is found at Asn65, Asn101, Asn153, and Asn184.

The protein belongs to the peptidase S10 family.

Its subcellular location is the secreted. This is Putative serine carboxypeptidase-like 53 (SCPL53) from Arabidopsis thaliana (Mouse-ear cress).